The primary structure comprises 215 residues: Outer-membrane lipoprotein LolB (215 aa).

The N-terminal stretch at 1–19 is a signal peptide; the sequence is MSKLRKITSLIFLTIIMVG. A lipid anchor (N-palmitoyl cysteine) is attached at Cys20. Residue Cys20 is the site of S-diacylglycerol cysteine attachment.

This sequence belongs to the LolB family. As to quaternary structure, monomer.

It localises to the cell outer membrane. Functionally, plays a critical role in the incorporation of lipoproteins in the outer membrane after they are released by the LolA protein. This chain is Outer-membrane lipoprotein LolB, found in Vibrio atlanticus (strain LGP32) (Vibrio splendidus (strain Mel32)).